A 528-amino-acid polypeptide reads, in one-letter code: 4-nitrophenol 4-monooxygenase/4-nitrocatechol 2-monooxygenase, oxygenase component (528 aa).

Residue 100 to 104 (RPPAG) coordinates substrate. FAD-binding positions include 153-155 (PMF), 159-162 (QFDR), and T194. A substrate-binding site is contributed by 205–206 (GN). 461 to 464 (TMQR) contributes to the FAD binding site.

This sequence belongs to the FADH(2)-utilizing monooxygenase family. The 4-NP/4-NCA monooxygenase is composed of an oxygenase component NpcA and a reductase component NpcB. FAD serves as cofactor.

It catalyses the reaction 4-nitrophenol + NADH + O2 + H(+) = 4-nitrocatechol + NAD(+) + H2O. The enzyme catalyses 4-nitrocatechol + NADPH + O2 = 2-hydroxy-1,4-benzoquinone + nitrite + NADP(+) + H2O. It carries out the reaction 4-nitrocatechol + NADH + O2 = 2-hydroxy-1,4-benzoquinone + nitrite + NAD(+) + H2O. It participates in aromatic compound metabolism. Its pathway is xenobiotic degradation. Inhibited by methimazole. Functionally, involved in the degradation of para-nitrophenol (4-NP). Catalyzes both the initial hydroxylation of 4-NP to produce 4-nitrocatechol (4-NCA) and the subsequent oxidative release of the nitro group from 4-NCA to produce 2-hydroxy-1,4-benzoquinone. It can also use 4-nitroresorcinol as substrate with a rate of nitrite release similar to that observed with the two physiological substrates, 4-PN and 4-NCA. This chain is 4-nitrophenol 4-monooxygenase/4-nitrocatechol 2-monooxygenase, oxygenase component (npcA), found in Rhodococcus opacus (Nocardia opaca).